The following is a 1392-amino-acid chain: ATP-dependent helicase/nuclease subunit A (1392 aa).

Residues 3-489 (NPKWTPAQQA…IDLNQNFRSR (487 aa)) form the UvrD-like helicase ATP-binding domain. 24–31 (AAAGSGKT) contacts ATP. 3 disordered regions span residues 291–319 (RGSK…KARD), 555–594 (KRGA…LEEA), and 1051–1126 (GPVQ…LDTK). 2 stretches are compositionally biased toward basic and acidic residues: residues 305–319 (ENSK…KARD) and 567–583 (SPAK…REPE). One can recognise a UvrD-like helicase C-terminal domain in the interval 556 to 886 (RGAEDAATEV…RFITVHSSKG (331 aa)). Positions 584-594 (SGDDESSLEEA) are enriched in acidic residues. Residues 1088–1113 (ASGKTEIPGETKNSEETKTSEDKKNL) show a composition bias toward basic and acidic residues.

Belongs to the helicase family. AddA subfamily. As to quaternary structure, heterodimer of AddA and AddB/RexB. Mg(2+) serves as cofactor.

The catalysed reaction is Couples ATP hydrolysis with the unwinding of duplex DNA by translocating in the 3'-5' direction.. The enzyme catalyses ATP + H2O = ADP + phosphate + H(+). In terms of biological role, the heterodimer acts as both an ATP-dependent DNA helicase and an ATP-dependent, dual-direction single-stranded exonuclease. Recognizes the chi site generating a DNA molecule suitable for the initiation of homologous recombination. The AddA nuclease domain is required for chi fragment generation; this subunit has the helicase and 3' -&gt; 5' nuclease activities. In Desulfitobacterium hafniense (strain DSM 10664 / DCB-2), this protein is ATP-dependent helicase/nuclease subunit A.